We begin with the raw amino-acid sequence, 61 residues long: Three-finger hemachatoxin (61 aa).

Disulfide bonds link Cys-3/Cys-22, Cys-15/Cys-39, Cys-43/Cys-54, and Cys-55/Cys-60.

This sequence belongs to the three-finger toxin family. Short-chain subfamily. Type IB cytotoxin sub-subfamily. Expressed by the venom gland.

Its subcellular location is the secreted. This protein lyses red blood cells and has cardiotoxic and hypotensive activities. The sequence is that of Three-finger hemachatoxin from Hemachatus haemachatus (Rinkhals).